A 239-amino-acid chain; its full sequence is UPF0126 membrane protein VC_2382 (239 aa).

The next 6 helical transmembrane spans lie at 38–58 (LLYLIDMFGTAVFAVSGVLLA), 62–82 (KMDPFGVMVLASVTAIGGGTI), 86–106 (ALGATPVFWIKDTNYLWVIMI), 122–142 (AWWILPVCDAIGLAVFVGIGV), 153–173 (LIAIIMGVITGCGGGIIRDVL), and 185–205 (VYATACIIGGIFHTTALAMGY).

Belongs to the UPF0126 family.

It localises to the cell membrane. This is UPF0126 membrane protein VC_2382 from Vibrio cholerae serotype O1 (strain ATCC 39315 / El Tor Inaba N16961).